Reading from the N-terminus, the 238-residue chain is Ribose-5-phosphate isomerase A (238 aa).

Substrate-binding positions include 30-33, 87-90, and 100-103; these read SGST, DGAD, and KGGG. The active-site Proton acceptor is Glu109. Lys127 is a binding site for substrate.

The protein belongs to the ribose 5-phosphate isomerase family. In terms of assembly, homodimer.

It catalyses the reaction aldehydo-D-ribose 5-phosphate = D-ribulose 5-phosphate. It participates in carbohydrate degradation; pentose phosphate pathway; D-ribose 5-phosphate from D-ribulose 5-phosphate (non-oxidative stage): step 1/1. In terms of biological role, catalyzes the reversible conversion of ribose-5-phosphate to ribulose 5-phosphate. The sequence is that of Ribose-5-phosphate isomerase A from Synechococcus sp. (strain WH7803).